Here is a 208-residue protein sequence, read N- to C-terminus: Putative archaetidylserine decarboxylase proenzyme (208 aa).

Catalysis depends on serine 172, which acts as the Schiff-base intermediate with substrate; via pyruvic acid. Serine 172 is modified (pyruvic acid (Ser); by autocatalysis).

It belongs to the phosphatidylserine decarboxylase family. PSD-A subfamily. In terms of assembly, heterodimer of a large membrane-associated beta subunit and a small pyruvoyl-containing alpha subunit. Requires pyruvate as cofactor. Is synthesized initially as an inactive proenzyme. Formation of the active enzyme involves a self-maturation process in which the active site pyruvoyl group is generated from an internal serine residue via an autocatalytic post-translational modification. Two non-identical subunits are generated from the proenzyme in this reaction, and the pyruvate is formed at the N-terminus of the alpha chain, which is derived from the carboxyl end of the proenzyme. The post-translation cleavage follows an unusual pathway, termed non-hydrolytic serinolysis, in which the side chain hydroxyl group of the serine supplies its oxygen atom to form the C-terminus of the beta chain, while the remainder of the serine residue undergoes an oxidative deamination to produce ammonia and the pyruvoyl prosthetic group on the alpha chain.

It is found in the cell membrane. The catalysed reaction is archaetidylserine + H(+) = archaetidylethanolamine + CO2. In terms of biological role, catalyzes the formation of archaetidylethanolamine (PtdEtn) from archaetidylserine (PtdSer). This chain is Putative archaetidylserine decarboxylase proenzyme, found in Methanosarcina acetivorans (strain ATCC 35395 / DSM 2834 / JCM 12185 / C2A).